The following is a 544-amino-acid chain: Hydroxylamine reductase (544 aa).

[4Fe-4S] cluster contacts are provided by C3, C6, C15, and C21. Positions 244, 268, 313, 400, 428, 453, 487, and 489 each coordinate hybrid [4Fe-2O-2S] cluster. C400 carries the cysteine persulfide modification.

It belongs to the HCP family. The cofactor is [4Fe-4S] cluster. Hybrid [4Fe-2O-2S] cluster serves as cofactor.

Its subcellular location is the cytoplasm. The enzyme catalyses A + NH4(+) + H2O = hydroxylamine + AH2 + H(+). Catalyzes the reduction of hydroxylamine to form NH(3) and H(2)O. The sequence is that of Hydroxylamine reductase from Trichormus variabilis (strain ATCC 29413 / PCC 7937) (Anabaena variabilis).